Reading from the N-terminus, the 222-residue chain is Interleukin-12 subunit alpha (222 aa).

Positions 1–25 (MCPLRSLFLMATLVFLNHLDHLSLA) are cleaved as a signal peptide. 3 cysteine pairs are disulfide-bonded: Cys40–Cys113, Cys67–Cys199, and Cys88–Cys126. N-linked (GlcNAc...) asparagine glycans are attached at residues Asn96 and Asn174.

The protein belongs to the IL-6 superfamily. As to quaternary structure, heterodimer with IL12B; disulfide-linked. This heterodimer is known as interleukin IL-12. Heterodimer with EBI3/IL27B; not disulfide-linked. This heterodimer is known as interleukin IL-35. Interacts with NBR1; this interaction promotes IL-12 secretion.

It is found in the secreted. In terms of biological role, heterodimerizes with IL12B to form the IL-12 cytokine or with EBI3/IL27B to form the IL-35 cytokine. IL-12 is primarily produced by professional antigen-presenting cells (APCs) such as B-cells and dendritic cells (DCs) as well as macrophages and granulocytes and regulates T-cell and natural killer-cell responses, induces the production of interferon-gamma (IFN-gamma), favors the differentiation of T-helper 1 (Th1) cells and is an important link between innate resistance and adaptive immunity. Mechanistically, exerts its biological effects through a receptor composed of IL12R1 and IL12R2 subunits. Binding to the receptor results in the rapid tyrosine phosphorylation of a number of cellular substrates including the JAK family kinases TYK2 and JAK2. In turn, recruited STAT4 gets phosphorylated and translocates to the nucleus where it regulates cytokine/growth factor responsive genes. As part of IL-35, plays essential roles in maintaining the immune homeostasis of the liver microenvironment and also functions as an immune-suppressive cytokine. Mediates biological events through unconventional receptors composed of IL12RB2 and gp130/IL6ST heterodimers or homodimers. Signaling requires the transcription factors STAT1 and STAT4, which form a unique heterodimer that binds to distinct DNA sites. The sequence is that of Interleukin-12 subunit alpha (IL12A) from Lama glama (Llama).